The primary structure comprises 273 residues: MRQIAIYGKGGIGKSTTTQNLTAALATMGNKILLVGCDPKADSTRMLLGGLNQKTVLDTLRSEGDEGVNLDVVVQPGFGNIKCVESGGPEPGVGCAGRGIITSIGLLENLGAYTEDLDYVFYDVLGDVVCGGFAMPIREGKAKEIYIVASGELMAIYAANNICKGLAKFAKGGARLGGIICNSRNVDGERELLEAFAKKLGSQLIHFVPRDNIVQRAEINRKTVIDFDPESNQAKEYLTLASNVQNNTKLVVPTPLPMEELEAMMVEFGIVEL.

8–15 lines the ATP pocket; the sequence is GKGGIGKS. A [4Fe-4S] cluster-binding site is contributed by cysteine 95. Arginine 98 bears the ADP-ribosylarginine; by dinitrogenase reductase ADP-ribosyltransferase mark. Cysteine 130 contacts [4Fe-4S] cluster.

This sequence belongs to the NifH/BchL/ChlL family. Homodimer. Requires [4Fe-4S] cluster as cofactor. In terms of processing, the reversible ADP-ribosylation of Arg-98 inactivates the nitrogenase reductase and regulates nitrogenase activity.

The catalysed reaction is N2 + 8 reduced [2Fe-2S]-[ferredoxin] + 16 ATP + 16 H2O = H2 + 8 oxidized [2Fe-2S]-[ferredoxin] + 2 NH4(+) + 16 ADP + 16 phosphate + 6 H(+). Functionally, the key enzymatic reactions in nitrogen fixation are catalyzed by the nitrogenase complex, which has 2 components: the iron protein and the molybdenum-iron protein. This is Nitrogenase iron protein from Methanosarcina mazei (strain ATCC BAA-159 / DSM 3647 / Goe1 / Go1 / JCM 11833 / OCM 88) (Methanosarcina frisia).